A 225-amino-acid polypeptide reads, in one-letter code: Cbp/p300-interacting transactivator 2 (225 aa).

Belongs to the CITED family.

The protein resides in the nucleus. Functionally, transcriptional coactivator or corepressor of the p300/CBP-mediated transcription complex. May be involved in sex determination, early gonad development, left-right patterning during embryogenesis and differentiation of the adrenal cortex. This chain is Cbp/p300-interacting transactivator 2 (cited2), found in Xenopus tropicalis (Western clawed frog).